A 419-amino-acid polypeptide reads, in one-letter code: Imidazolonepropionase (419 aa).

Fe(3+) contacts are provided by H87 and H89. Zn(2+) contacts are provided by H87 and H89. R96, Y159, and H192 together coordinate 4-imidazolone-5-propanoate. Y159 is an N-formimidoyl-L-glutamate binding site. H257 lines the Fe(3+) pocket. Position 257 (H257) interacts with Zn(2+). Residue Q260 coordinates 4-imidazolone-5-propanoate. Position 332 (D332) interacts with Fe(3+). D332 contacts Zn(2+). N-formimidoyl-L-glutamate contacts are provided by N334 and G336. S337 serves as a coordination point for 4-imidazolone-5-propanoate.

Belongs to the metallo-dependent hydrolases superfamily. HutI family. Requires Zn(2+) as cofactor. Fe(3+) is required as a cofactor.

Its subcellular location is the cytoplasm. The catalysed reaction is 4-imidazolone-5-propanoate + H2O = N-formimidoyl-L-glutamate. It functions in the pathway amino-acid degradation; L-histidine degradation into L-glutamate; N-formimidoyl-L-glutamate from L-histidine: step 3/3. Functionally, catalyzes the hydrolytic cleavage of the carbon-nitrogen bond in imidazolone-5-propanoate to yield N-formimidoyl-L-glutamate. It is the third step in the universal histidine degradation pathway. This chain is Imidazolonepropionase, found in Alteromonas mediterranea (strain DSM 17117 / CIP 110805 / LMG 28347 / Deep ecotype).